Reading from the N-terminus, the 333-residue chain is Phosphate acyltransferase (333 aa).

Belongs to the PlsX family. In terms of assembly, homodimer. Probably interacts with PlsY.

Its subcellular location is the cytoplasm. The catalysed reaction is a fatty acyl-[ACP] + phosphate = an acyl phosphate + holo-[ACP]. It participates in lipid metabolism; phospholipid metabolism. Functionally, catalyzes the reversible formation of acyl-phosphate (acyl-PO(4)) from acyl-[acyl-carrier-protein] (acyl-ACP). This enzyme utilizes acyl-ACP as fatty acyl donor, but not acyl-CoA. The polypeptide is Phosphate acyltransferase (Clostridium botulinum (strain Alaska E43 / Type E3)).